Consider the following 153-residue polypeptide: MRELAGSPGTWSGLSLRVGQLVFAAASVCATASALGFAAYTAFCYLIASMGLQALWSLGLACLDCYALKFKKDLHSAVLLSLFVVGDWVTAILSFAASCSAAGVVVLFDRDIYACRNPQLPCGRFELAIACAFLSWAFSATSALVMFWLLASL.

The Cytoplasmic segment spans residues 1-20; that stretch reads MRELAGSPGTWSGLSLRVGQ. Residues 21-41 traverse the membrane as a helical segment; the sequence is LVFAAASVCATASALGFAAYT. Residue A42 is a topological domain, extracellular. The helical transmembrane segment at 43–63 threads the bilayer; that stretch reads FCYLIASMGLQALWSLGLACL. Over 64-76 the chain is Cytoplasmic; that stretch reads DCYALKFKKDLHS. A helical transmembrane segment spans residues 77 to 97; the sequence is AVLLSLFVVGDWVTAILSFAA. Topologically, residues 98 to 128 are extracellular; sequence SCSAAGVVVLFDRDIYACRNPQLPCGRFELA. The chain crosses the membrane as a helical span at residues 129 to 149; sequence IACAFLSWAFSATSALVMFWL. Topologically, residues 150–153 are cytoplasmic; that stretch reads LASL.

The protein belongs to the Casparian strip membrane proteins (CASP) family. In terms of assembly, homodimer and heterodimers.

Its subcellular location is the cell membrane. This chain is CASP-like protein 5B1, found in Oryza sativa subsp. indica (Rice).